The sequence spans 489 residues: Ribonuclease G (489 aa).

The S1 motif domain maps to 39–128 (GNIYKGRVSR…LTTDITLPSR (90 aa)). Residues aspartate 304 and aspartate 347 each contribute to the Mg(2+) site.

It belongs to the RNase E/G family. RNase G subfamily. Homodimer, in equilibrium with possible higher multimers. Mg(2+) is required as a cofactor.

The protein resides in the cytoplasm. Functionally, an endonuclease that acts in the processing of the 5'-end of 16S rRNA and 23S rRNA. It prefers 5'-monophosphorylated substrates and cleaves single-stranded sites rich in A and U residues; contributes to tRNA processing and mRNA turnover. This is Ribonuclease G (rng) from Escherichia coli O157:H7.